Reading from the N-terminus, the 505-residue chain is Flagellin (505 aa).

Belongs to the bacterial flagellin family.

The protein localises to the secreted. Its subcellular location is the bacterial flagellum. In terms of biological role, flagellin is the subunit protein which polymerizes to form the filaments of bacterial flagella. In Salmonella derby, this protein is Flagellin (fliC).